We begin with the raw amino-acid sequence, 562 residues long: Arginine--tRNA ligase 2 (562 aa).

The short motif at 122–132 (PNIAKPFSMGH) is the 'HIGH' region element.

The protein belongs to the class-I aminoacyl-tRNA synthetase family. Monomer.

It is found in the cytoplasm. It carries out the reaction tRNA(Arg) + L-arginine + ATP = L-arginyl-tRNA(Arg) + AMP + diphosphate. The sequence is that of Arginine--tRNA ligase 2 (argS2) from Bacillus anthracis.